The chain runs to 556 residues: Non-structural maintenance of chromosome element 5 (556 aa).

Component of the Smc5-Smc6 complex which consists of KRE29, MMS21, NSE1, NSE3, NSE4, NSE5, SMC5 and SMC6. Interacts with KRE29.

Its subcellular location is the nucleus. The protein resides in the chromosome. Acts in a DNA repair pathway for removal of UV-induced DNA damage that is distinct from classical nucleotide excision repair and in repair of ionizing radiation damage. Functions in homologous recombination repair of DNA double strand breaks and in recovery of stalled replication forks. The sequence is that of Non-structural maintenance of chromosome element 5 (NSE5) from Saccharomyces cerevisiae (strain ATCC 204508 / S288c) (Baker's yeast).